The chain runs to 253 residues: Imidazole glycerol phosphate synthase subunit HisF (253 aa).

Catalysis depends on residues D11 and D130.

The protein belongs to the HisA/HisF family. In terms of assembly, heterodimer of HisH and HisF.

It localises to the cytoplasm. It carries out the reaction 5-[(5-phospho-1-deoxy-D-ribulos-1-ylimino)methylamino]-1-(5-phospho-beta-D-ribosyl)imidazole-4-carboxamide + L-glutamine = D-erythro-1-(imidazol-4-yl)glycerol 3-phosphate + 5-amino-1-(5-phospho-beta-D-ribosyl)imidazole-4-carboxamide + L-glutamate + H(+). Its pathway is amino-acid biosynthesis; L-histidine biosynthesis; L-histidine from 5-phospho-alpha-D-ribose 1-diphosphate: step 5/9. IGPS catalyzes the conversion of PRFAR and glutamine to IGP, AICAR and glutamate. The HisF subunit catalyzes the cyclization activity that produces IGP and AICAR from PRFAR using the ammonia provided by the HisH subunit. The sequence is that of Imidazole glycerol phosphate synthase subunit HisF from Clostridium botulinum (strain Kyoto / Type A2).